We begin with the raw amino-acid sequence, 531 residues long: Transporter mfs1 (531 aa).

10 consecutive transmembrane segments (helical) span residues 83–103 (LVVT…SAIF), 119–139 (VPVI…PLIF), 158–178 (LIVF…GVLL), 182–202 (FLAG…LADI), 214–234 (FWSL…AAMV), 241–261 (WQFW…TFFM), 325–345 (IYIG…PILF), 358–378 (LVYM…FIYL), 398–418 (ILII…WFGW), and 424–444 (VHWI…FLLF). N-linked (GlcNAc...) asparagine glycosylation is present at N486. Residues 496–516 (GWGSTILGVISCIMIPIPFLI) form a helical membrane-spanning segment.

Belongs to the major facilitator superfamily. CAR1 family.

The protein resides in the endoplasmic reticulum. Its subcellular location is the membrane. In Schizosaccharomyces pombe (strain 972 / ATCC 24843) (Fission yeast), this protein is Transporter mfs1 (mfs1).